We begin with the raw amino-acid sequence, 463 residues long: MVKTRFAPSPTGYLHIGGARTALFSWAFARKQGGKFVLRIEDTDLERSTQQSVQAILDGMAWLGLDYDEGPYYQMQRLNRYQEVAEQLLTQGLAYQCYASREELDALREQQRLAGLKPRYDGRWRDSRQTPPAGVKPVVRLKTPQHGYVVFDDLVKGKISVANHELDDLVLLRSDGTPTYNFGVVLDDLDMGITHVIRGDDHVNNTPRQINILKALGAAIPQYAHVPMILGADGERLSKRHGAVSVMHYRDQGYLPEALINYLARLGWSHGDEEIFSREQLVEWFDLAAISRSPAKFNPEKLTWLNQHYLKMADDARLVELVMPFLLERNYPLPATENLLKIVNLLKDRASTIEELADASAYFFRTIEPPEELRTQYFTAEIRPVLEYLVDRLAQIEWKRETIHHEIKQTVSSHNLKFPSLAMPLRVMVTGEAQTPAIDAVLELLGKEETLHRLRGRMEIFPG.

Positions 8-18 (PSPTGYLHIGG) match the 'HIGH' region motif. The short motif at 236–240 (RLSKR) is the 'KMSKS' region element. Residue Lys-239 participates in ATP binding.

The protein belongs to the class-I aminoacyl-tRNA synthetase family. Glutamate--tRNA ligase type 1 subfamily. As to quaternary structure, monomer.

It is found in the cytoplasm. It catalyses the reaction tRNA(Glu) + L-glutamate + ATP = L-glutamyl-tRNA(Glu) + AMP + diphosphate. In terms of biological role, catalyzes the attachment of glutamate to tRNA(Glu) in a two-step reaction: glutamate is first activated by ATP to form Glu-AMP and then transferred to the acceptor end of tRNA(Glu). The polypeptide is Glutamate--tRNA ligase (Nitrosomonas europaea (strain ATCC 19718 / CIP 103999 / KCTC 2705 / NBRC 14298)).